A 1147-amino-acid polypeptide reads, in one-letter code: Cellulose synthase-like protein D3 (1147 aa).

Disordered regions lie at residues 1–33 and 259–281; these read MSTG…PAGQ and KLGG…PFKP. Composition is skewed to gly residues over residues 14-29 and 262-272; these read GGVG…GPRG and GDGGGGGGGGP. A run of 2 helical transmembrane segments spans residues 292–312 and 322–342; these read VISP…FYLT and ALWL…SWLL. Active-site residues include aspartate 422 and aspartate 847. Helical transmembrane passes span 929 to 949, 954 to 974, 1001 to 1021, 1045 to 1065, 1075 to 1095, and 1108 to 1128; these read IFLL…FFIV, IAFL…GILE, LYAV…SFTL, LLIP…FAFA, WGKF…LNPF, and TIVF…WVAI.

The protein belongs to the glycosyltransferase 2 family. Plant cellulose synthase-like D subfamily.

It is found in the golgi apparatus membrane. Its function is as follows. Thought to be a Golgi-localized beta-glycan synthase that polymerize the backbones of noncellulosic polysaccharides (hemicelluloses) of plant cell wall. The chain is Cellulose synthase-like protein D3 (CSLD3) from Oryza sativa subsp. japonica (Rice).